The following is a 423-amino-acid chain: NDP-N-acetyl-D-galactosaminuronic acid dehydrogenase (423 aa).

Residue 11-28 participates in NAD(+) binding; the sequence is TISVVGLGYIGLPTATVL. The active-site Proton donor/acceptor is the Lys218. The active-site Nucleophile is the Cys272.

This sequence belongs to the UDP-glucose/GDP-mannose dehydrogenase family.

In terms of biological role, probably involved in the synthesis of sugar components of EPS I, by converting NDP-N-acetyl-D-galactosamine into NDP-N-acetyl-D-galactosaminuronic acid. The protein is NDP-N-acetyl-D-galactosaminuronic acid dehydrogenase (epsD) of Ralstonia nicotianae (strain ATCC BAA-1114 / GMI1000) (Ralstonia solanacearum).